Consider the following 326-residue polypeptide: Meiotically up-regulated gene 113 protein (326 aa).

It localises to the cytoplasm. Functionally, has a role in meiosis. In Schizosaccharomyces pombe (strain 972 / ATCC 24843) (Fission yeast), this protein is Meiotically up-regulated gene 113 protein (mug113).